A 154-amino-acid polypeptide reads, in one-letter code: 6,7-dimethyl-8-ribityllumazine synthase (154 aa).

5-amino-6-(D-ribitylamino)uracil contacts are provided by residues Phe-22, 56-58, and 80-82; these read AFE and AVI. 85–86 lines the (2S)-2-hydroxy-3-oxobutyl phosphate pocket; the sequence is AT. His-88 serves as the catalytic Proton donor. Phe-113 contributes to the 5-amino-6-(D-ribitylamino)uracil binding site. Residue Arg-127 coordinates (2S)-2-hydroxy-3-oxobutyl phosphate.

It belongs to the DMRL synthase family.

The enzyme catalyses (2S)-2-hydroxy-3-oxobutyl phosphate + 5-amino-6-(D-ribitylamino)uracil = 6,7-dimethyl-8-(1-D-ribityl)lumazine + phosphate + 2 H2O + H(+). The protein operates within cofactor biosynthesis; riboflavin biosynthesis; riboflavin from 2-hydroxy-3-oxobutyl phosphate and 5-amino-6-(D-ribitylamino)uracil: step 1/2. Catalyzes the formation of 6,7-dimethyl-8-ribityllumazine by condensation of 5-amino-6-(D-ribitylamino)uracil with 3,4-dihydroxy-2-butanone 4-phosphate. This is the penultimate step in the biosynthesis of riboflavin. The polypeptide is 6,7-dimethyl-8-ribityllumazine synthase (Syntrophobacter fumaroxidans (strain DSM 10017 / MPOB)).